We begin with the raw amino-acid sequence, 146 residues long: Putative pre-16S rRNA nuclease (146 aa).

This sequence belongs to the YqgF nuclease family.

The protein resides in the cytoplasm. Its function is as follows. Could be a nuclease involved in processing of the 5'-end of pre-16S rRNA. The sequence is that of Putative pre-16S rRNA nuclease from Mycoplasmopsis pulmonis (strain UAB CTIP) (Mycoplasma pulmonis).